The chain runs to 190 residues: Peptidyl-tRNA hydrolase (190 aa).

Tyr-14 is a tRNA binding site. The Proton acceptor role is filled by His-19. Tyr-64, Asn-66, and Asn-112 together coordinate tRNA.

This sequence belongs to the PTH family. In terms of assembly, monomer.

It localises to the cytoplasm. It catalyses the reaction an N-acyl-L-alpha-aminoacyl-tRNA + H2O = an N-acyl-L-amino acid + a tRNA + H(+). Its function is as follows. Hydrolyzes ribosome-free peptidyl-tRNAs (with 1 or more amino acids incorporated), which drop off the ribosome during protein synthesis, or as a result of ribosome stalling. Catalyzes the release of premature peptidyl moieties from peptidyl-tRNA molecules trapped in stalled 50S ribosomal subunits, and thus maintains levels of free tRNAs and 50S ribosomes. The protein is Peptidyl-tRNA hydrolase of Chlorobium limicola (strain DSM 245 / NBRC 103803 / 6330).